The primary structure comprises 243 residues: Nuclear cap-binding protein subunit 2 (243 aa).

Residues tyrosine 14, tyrosine 37, 106–110, 117–121, and 127–128 each bind mRNA; these read RVDFD, RQWGR, and QV. Residues 34–112 enclose the RRM domain; that stretch reads VTVYVGNMSF…RPIRVDFDWG (79 aa). 2 disordered regions span residues 120 to 144 and 161 to 243; these read GRGRSGGQVRDEYRTDYDPGRGGYG and GGAF…RRRR. 2 stretches are compositionally biased toward basic and acidic residues: residues 128–138 and 173–228; these read VRDEYRTDYDP and DRGD…REKG.

It belongs to the RRM NCBP2 family. As to quaternary structure, component of the nuclear cap-binding complex (CBC), a heterodimer composed of ABH1/CBP80 and CBP20 that interacts with m7GpppG-capped RNA.

The protein localises to the nucleus. The protein resides in the cytoplasm. In terms of biological role, component of the cap-binding complex (CBC), which binds co-transcriptionally to the 5' cap of pre-mRNAs and is involved in various processes such as pre-mRNA splicing and RNA-mediated gene silencing (RNAi) by microRNAs (miRNAs). The CBC complex is involved in miRNA-mediated RNA interference and is required for primary miRNA processing. In the CBC complex, CBP20 recognizes and binds capped RNAs (m7GpppG-capped RNA) but requires ABH1/CBP80 to stabilize the movement of its N-terminal loop and lock the CBC into a high affinity cap-binding state with the cap structure. CBP20 also plays a role in stabilization of ABH1/CBP80 and ABH1/CBP80 localization to the nucleus. This Oryza sativa subsp. japonica (Rice) protein is Nuclear cap-binding protein subunit 2 (CBP20).